A 419-amino-acid chain; its full sequence is GTPase Obg (419 aa).

The Obg domain maps to 1–156 (MRFVDYVSIE…FYLDLQLKVM (156 aa)). In terms of domain architecture, OBG-type G spans 157-334 (ADIGLVGKPN…LEEKQKKLEI (178 aa)). Residues 163-170 (GKPNAGKS), 188-192 (FTTLV), 209-212 (DLPG), 278-281 (NKCD), and 315-317 (NII) contribute to the GTP site. The Mg(2+) site is built by Ser170 and Thr190. Residues 342-419 (IEFNLKAPFL…RIYEFEFHWN (78 aa)) enclose the OCT domain.

It belongs to the TRAFAC class OBG-HflX-like GTPase superfamily. OBG GTPase family. In terms of assembly, monomer. Mg(2+) serves as cofactor.

Its subcellular location is the cytoplasm. Functionally, an essential GTPase which binds GTP, GDP and possibly (p)ppGpp with moderate affinity, with high nucleotide exchange rates and a fairly low GTP hydrolysis rate. Plays a role in control of the cell cycle, stress response, ribosome biogenesis and in those bacteria that undergo differentiation, in morphogenesis control. This is GTPase Obg from Mesomycoplasma hyopneumoniae (strain 232) (Mycoplasma hyopneumoniae).